The sequence spans 158 residues: Endoribonuclease YbeY (158 aa).

3 residues coordinate Zn(2+): His117, His121, and His127.

Belongs to the endoribonuclease YbeY family. The cofactor is Zn(2+).

Its subcellular location is the cytoplasm. Single strand-specific metallo-endoribonuclease involved in late-stage 70S ribosome quality control and in maturation of the 3' terminus of the 16S rRNA. The sequence is that of Endoribonuclease YbeY from Psychromonas ingrahamii (strain DSM 17664 / CCUG 51855 / 37).